Reading from the N-terminus, the 205-residue chain is dTTP/UTP pyrophosphatase (205 aa).

D81 serves as the catalytic Proton acceptor.

This sequence belongs to the Maf family. YhdE subfamily. The cofactor is a divalent metal cation.

It is found in the cytoplasm. The enzyme catalyses dTTP + H2O = dTMP + diphosphate + H(+). The catalysed reaction is UTP + H2O = UMP + diphosphate + H(+). Nucleoside triphosphate pyrophosphatase that hydrolyzes dTTP and UTP. May have a dual role in cell division arrest and in preventing the incorporation of modified nucleotides into cellular nucleic acids. This Agathobacter rectalis (strain ATCC 33656 / DSM 3377 / JCM 17463 / KCTC 5835 / VPI 0990) (Eubacterium rectale) protein is dTTP/UTP pyrophosphatase.